Reading from the N-terminus, the 315-residue chain is tRNA dimethylallyltransferase (315 aa).

13-20 (GPTASGKS) provides a ligand contact to ATP. Residue 15 to 20 (TASGKS) participates in substrate binding. 2 interaction with substrate tRNA regions span residues 38 to 41 (DSMQ) and 162 to 166 (QRLAR).

It belongs to the IPP transferase family. As to quaternary structure, monomer. Mg(2+) serves as cofactor.

The catalysed reaction is adenosine(37) in tRNA + dimethylallyl diphosphate = N(6)-dimethylallyladenosine(37) in tRNA + diphosphate. In terms of biological role, catalyzes the transfer of a dimethylallyl group onto the adenine at position 37 in tRNAs that read codons beginning with uridine, leading to the formation of N6-(dimethylallyl)adenosine (i(6)A). This is tRNA dimethylallyltransferase from Paramagnetospirillum magneticum (strain ATCC 700264 / AMB-1) (Magnetospirillum magneticum).